Here is a 160-residue protein sequence, read N- to C-terminus: SsrA-binding protein (160 aa).

The protein belongs to the SmpB family.

The protein localises to the cytoplasm. In terms of biological role, required for rescue of stalled ribosomes mediated by trans-translation. Binds to transfer-messenger RNA (tmRNA), required for stable association of tmRNA with ribosomes. tmRNA and SmpB together mimic tRNA shape, replacing the anticodon stem-loop with SmpB. tmRNA is encoded by the ssrA gene; the 2 termini fold to resemble tRNA(Ala) and it encodes a 'tag peptide', a short internal open reading frame. During trans-translation Ala-aminoacylated tmRNA acts like a tRNA, entering the A-site of stalled ribosomes, displacing the stalled mRNA. The ribosome then switches to translate the ORF on the tmRNA; the nascent peptide is terminated with the 'tag peptide' encoded by the tmRNA and targeted for degradation. The ribosome is freed to recommence translation, which seems to be the essential function of trans-translation. This Salmonella arizonae (strain ATCC BAA-731 / CDC346-86 / RSK2980) protein is SsrA-binding protein.